We begin with the raw amino-acid sequence, 132 residues long: Translation initiation factor 5A (132 aa).

Lys-37 bears the Hypusine mark.

It belongs to the eIF-5A family.

It localises to the cytoplasm. In terms of biological role, functions by promoting the formation of the first peptide bond. In Methanocaldococcus jannaschii (strain ATCC 43067 / DSM 2661 / JAL-1 / JCM 10045 / NBRC 100440) (Methanococcus jannaschii), this protein is Translation initiation factor 5A (eif5a).